Here is a 361-residue protein sequence, read N- to C-terminus: tRNA 2-selenouridine synthase (361 aa).

In terms of domain architecture, Rhodanese spans 11–134 (ALLERPLIDV…MRQCVNAEIE (124 aa)). The active-site S-selanylcysteine intermediate is cysteine 94.

This sequence belongs to the SelU family. As to quaternary structure, monomer.

It catalyses the reaction 5-methylaminomethyl-2-thiouridine(34) in tRNA + selenophosphate + (2E)-geranyl diphosphate + H2O + H(+) = 5-methylaminomethyl-2-selenouridine(34) in tRNA + (2E)-thiogeraniol + phosphate + diphosphate. It carries out the reaction 5-methylaminomethyl-2-thiouridine(34) in tRNA + (2E)-geranyl diphosphate = 5-methylaminomethyl-S-(2E)-geranyl-thiouridine(34) in tRNA + diphosphate. The catalysed reaction is 5-methylaminomethyl-S-(2E)-geranyl-thiouridine(34) in tRNA + selenophosphate + H(+) = 5-methylaminomethyl-2-(Se-phospho)selenouridine(34) in tRNA + (2E)-thiogeraniol. The enzyme catalyses 5-methylaminomethyl-2-(Se-phospho)selenouridine(34) in tRNA + H2O = 5-methylaminomethyl-2-selenouridine(34) in tRNA + phosphate. Functionally, involved in the post-transcriptional modification of the uridine at the wobble position (U34) of tRNA(Lys), tRNA(Glu) and tRNA(Gln). Catalyzes the conversion of 2-thiouridine (S2U-RNA) to 2-selenouridine (Se2U-RNA). Acts in a two-step process involving geranylation of 2-thiouridine (S2U) to S-geranyl-2-thiouridine (geS2U) and subsequent selenation of the latter derivative to 2-selenouridine (Se2U) in the tRNA chain. This chain is tRNA 2-selenouridine synthase, found in Chromohalobacter salexigens (strain ATCC BAA-138 / DSM 3043 / CIP 106854 / NCIMB 13768 / 1H11).